The following is a 240-amino-acid chain: Aquaporin SIP1-1 (240 aa).

2 helical membrane-spanning segments follow: residues 13–33 (LMTFSWVVLSATFGIQTAAII) and 44–64 (APLVILTSLIFVYVSIFTVIF). The short motif at 70 to 72 (NPT) is the NPA 1 element. 3 helical membrane-spanning segments follow: residues 89–109 (SLAIRLPAQAIGAAGGALAIM), 132–152 (GAIAETILSFGITFAVLLIIL), and 163–183 (FLLALATISFVVAGSKYTGPA). Residues 185–187 (NPA) carry the NPA 2 motif. A helical transmembrane segment spans residues 203 to 223 (DHIYVYWISSFVGALSAALLF).

Belongs to the MIP/aquaporin (TC 1.A.8) family. SIP (TC 1.A.8.10) subfamily. In terms of tissue distribution, expressed in roots and above ground. Expressed in elongating regions of the root tips, trichome cells of the rosette leaves, vascular tissues of the flower petals, stigma, stamens (anthers and filaments), pollen and the top and bottom (receptacle) of siliques.

It is found in the endoplasmic reticulum membrane. Functionally, water channel required to facilitate the transport of water across cell membrane. This Arabidopsis thaliana (Mouse-ear cress) protein is Aquaporin SIP1-1 (SIP1-1).